Consider the following 346-residue polypeptide: D-fructose 1,6-bisphosphatase class 2/sedoheptulose 1,7-bisphosphatase 1 (346 aa).

Asp33, Glu57, Asp97, and Glu100 together coordinate Mn(2+). Substrate is bound by residues Glu100–Thr102, Tyr131, Arg176–Arg178, and Asp198–Asp200. Position 225 (Glu225) interacts with Mn(2+).

Belongs to the FBPase class 2 family. In terms of assembly, homotetramer. Requires Mn(2+) as cofactor.

The enzyme catalyses beta-D-fructose 1,6-bisphosphate + H2O = beta-D-fructose 6-phosphate + phosphate. It carries out the reaction D-sedoheptulose 1,7-bisphosphate + H2O = D-sedoheptulose 7-phosphate + phosphate. It participates in carbohydrate biosynthesis; Calvin cycle. Functionally, catalyzes the hydrolysis of fructose 1,6-bisphosphate (Fru 1,6-P2) and sedoheptulose 1,7-bisphosphate (Sed 1,7-P2) to fructose 6-phosphate and sedoheptulose 7-phosphate, respectively. This chain is D-fructose 1,6-bisphosphatase class 2/sedoheptulose 1,7-bisphosphatase 1, found in Acaryochloris marina (strain MBIC 11017).